A 757-amino-acid chain; its full sequence is Chloride anion exchanger (757 aa).

The Cytoplasmic segment spans residues 1–71 (MIEAIGNQYV…SWLPAYKIKE (71 aa)). The helical transmembrane segment at 72–92 (WLLSDIVSGISTGLVAVLQGL) threads the bilayer. Position 93 (alanine 93) is a topological domain, extracellular. The helical transmembrane segment at 94–114 (FALLVNIPPAYGLYAAFFPVI) threads the bilayer. The Cytoplasmic portion of the chain corresponds to 115–124 (TYFFLGTSRH). A helical transmembrane segment spans residues 125–145 (ISVGPFPVLSMMVGVVVTRVA). Residues 146 to 176 (SGSDTSPALSSSSAENDSMIEEKVMVAASVT) lie on the Extracellular side of the membrane. N-linked (GlcNAc...) asparagine glycosylation is present at asparagine 161. The chain crosses the membrane as a helical span at residues 177-197 (VLSGIIQLLLGVLQIGFVVIY). At 198-201 (LSES) the chain is on the cytoplasmic side. The helical transmembrane segment at 202-222 (LISGFTTAAAIHVLVSQLKFM) threads the bilayer. The Extracellular portion of the chain corresponds to 223-250 (LQLTVPAHSDPFSIFKVLESVFSQIQKT). Residues 251–271 (NIADLVTSVIILVVVFVVKEI) form a helical membrane-spanning segment. Over 272-278 (NQRYRSK) the chain is Cytoplasmic. A helical transmembrane segment spans residues 279-299 (LPVPIPIELIMTVIATGISYG). Over 300–335 (CNFEQRFGVAVVGNMSLGFQPPITPSVEVFQDTIGD) the chain is Extracellular. The chain crosses the membrane as a helical span at residues 336–356 (CFGIAIVGFAVAFSVASVYSL). Over 357-367 (KYDYPIDGNQE) the chain is Cytoplasmic. The helical transmembrane segment at 368 to 388 (LIALGVSNIFTGAFKGFAGST) threads the bilayer. Over 389–404 (ALSRSGVQESTGGKTQ) the chain is Extracellular. The helical transmembrane segment at 405–425 (VAGLLSAVIVLIVIVAIGFLL) threads the bilayer. At 426–462 (QPLQKSVLAALALGNLKGMLMQFAEIGRLWKKDKYDC) the chain is on the cytoplasmic side. A helical membrane pass occupies residues 463–483 (LIWIMTFIFAIVLGLGLGLAA). The Extracellular portion of the chain corresponds to 484 to 757 (SVAFQLLTIV…ECQVPVETKF (274 aa)). Residues 518-713 (NYADVYEPEG…LTIHDAILHI (196 aa)) form the STAS domain. The short motif at 754 to 757 (ETKF) is the PDZ-binding element.

It belongs to the SLC26A/SulP transporter (TC 2.A.53) family. As to quaternary structure, interacts with PDZK1, CFTR, SLC26A6 and NHERF1. Interacts (via PDZ-binding motif) with NHERF4 (via the third PDZ domain); interaction leads to decreased expression of SLC26A3 on the cell membrane resulting in its reduced exchanger activity. In terms of processing, N-glycosylation is required for efficient cell surface expression, and protection from proteolytic degradation.

The protein resides in the apical cell membrane. Its subcellular location is the membrane. It is found in the cell membrane. The enzyme catalyses hydrogencarbonate(in) + 2 chloride(out) = hydrogencarbonate(out) + 2 chloride(in). In terms of biological role, mediates chloride-bicarbonate exchange with a chloride bicarbonate stoichiometry of 2:1 in the intestinal epithelia. Plays a role in the chloride and bicarbonate homeostasis during sperm epididymal maturation and capacitation. The chain is Chloride anion exchanger (Slc26a3) from Rattus norvegicus (Rat).